The primary structure comprises 202 residues: Pyridoxal 5'-phosphate synthase subunit PdxT (202 aa).

Position 49–51 (49–51) interacts with L-glutamine; sequence GES. Cys-81 serves as the catalytic Nucleophile. L-glutamine contacts are provided by residues Arg-110 and 139 to 140; that span reads IR. Catalysis depends on charge relay system residues His-182 and Glu-184.

This sequence belongs to the glutaminase PdxT/SNO family. As to quaternary structure, in the presence of PdxS, forms a dodecamer of heterodimers. Only shows activity in the heterodimer.

The enzyme catalyses aldehydo-D-ribose 5-phosphate + D-glyceraldehyde 3-phosphate + L-glutamine = pyridoxal 5'-phosphate + L-glutamate + phosphate + 3 H2O + H(+). It carries out the reaction L-glutamine + H2O = L-glutamate + NH4(+). The protein operates within cofactor biosynthesis; pyridoxal 5'-phosphate biosynthesis. Its function is as follows. Catalyzes the hydrolysis of glutamine to glutamate and ammonia as part of the biosynthesis of pyridoxal 5'-phosphate. The resulting ammonia molecule is channeled to the active site of PdxS. This is Pyridoxal 5'-phosphate synthase subunit PdxT from Rhodococcus jostii (strain RHA1).